The following is a 669-amino-acid chain: DNA ligase 2 (669 aa).

Residues 35-39 (DKEYD) and 83-84 (SL) each bind NAD(+). The N6-AMP-lysine intermediate role is filled by Lys-125. NAD(+)-binding residues include Arg-147, Glu-181, and Lys-317. Positions 410, 413, 426, and 432 each coordinate Zn(2+). One can recognise a BRCT domain in the interval 590–669 (VVENAFTGKT…EEFEQLINNM (80 aa)).

This sequence belongs to the NAD-dependent DNA ligase family. LigA subfamily. Requires Mg(2+) as cofactor. Mn(2+) is required as a cofactor.

It catalyses the reaction NAD(+) + (deoxyribonucleotide)n-3'-hydroxyl + 5'-phospho-(deoxyribonucleotide)m = (deoxyribonucleotide)n+m + AMP + beta-nicotinamide D-nucleotide.. Functionally, DNA ligase that catalyzes the formation of phosphodiester linkages between 5'-phosphoryl and 3'-hydroxyl groups in double-stranded DNA using NAD as a coenzyme and as the energy source for the reaction. It is essential for DNA replication and repair of damaged DNA. This chain is DNA ligase 2, found in Clostridium acetobutylicum (strain ATCC 824 / DSM 792 / JCM 1419 / IAM 19013 / LMG 5710 / NBRC 13948 / NRRL B-527 / VKM B-1787 / 2291 / W).